The chain runs to 84 residues: Cytochrome b559 subunit alpha (84 aa).

A helical transmembrane segment spans residues 22-36 (IIHSITIPSLFVAGF). His-24 contacts heme.

The protein belongs to the PsbE/PsbF family. Heterodimer of an alpha subunit and a beta subunit. PSII is composed of 1 copy each of membrane proteins PsbA, PsbB, PsbC, PsbD, PsbE, PsbF, PsbH, PsbI, PsbJ, PsbK, PsbL, PsbM, PsbT, PsbX, PsbY, PsbZ, Psb30/Ycf12, at least 3 peripheral proteins of the oxygen-evolving complex and a large number of cofactors. It forms dimeric complexes. The cofactor is heme b.

The protein localises to the plastid. It localises to the chloroplast thylakoid membrane. Functionally, this b-type cytochrome is tightly associated with the reaction center of photosystem II (PSII). PSII is a light-driven water:plastoquinone oxidoreductase that uses light energy to abstract electrons from H(2)O, generating O(2) and a proton gradient subsequently used for ATP formation. It consists of a core antenna complex that captures photons, and an electron transfer chain that converts photonic excitation into a charge separation. In Emiliania huxleyi (Coccolithophore), this protein is Cytochrome b559 subunit alpha.